Reading from the N-terminus, the 356-residue chain is MAAKLLFFLLFLVSALSVALAGFEEDNPIRSVTQRPDSIEPAILGVLGSCRHAFHFARFARRYGKSYGSEEEIKKRFGIFVENLAFIRSTNRKDLSYTLGINQFADLTWEEFRTNRLGAAQNCSATAHGNHRFVDGVLPVTRDWREQGIVSPVKDQGSCGSCWTFSTTGALEAAYTQLTGKSTSLSEQQLVDCASAFNNFGCNGGLPSQAFEYVKYNGGIDTEQTYPYLGVNGICNFKQENVGVKVIDSINITLGAEDELKHAVGLVRPVSVAFEVVKGFNLYKKGVYSSDTCGRDPMDVNHAVLAVGYGVEDGIPYWLIKNSWGTNWGDNGYFKMELGKNMCGVATCASYPIVAV.

A glycan (N-linked (GlcNAc...) asparagine) is linked at Asn-122. 2 disulfide bridges follow: Cys-159/Cys-202 and Cys-193/Cys-235. Cys-162 is an active-site residue. Asn-251 carries an N-linked (GlcNAc...) asparagine glycan. A disulfide bridge links Cys-293 with Cys-343. Catalysis depends on residues His-302 and Asn-322.

Belongs to the peptidase C1 family. Forms homodimers, homotrimers and homotetramers. Accumulates in the inner part of vanilla pods (at protein level). Expressed in single cells located a few cell layers from the inner epidermis.

Its subcellular location is the plastid. It localises to the chloroplast. The enzyme catalyses (E)-ferulate + H2O = vanillin + acetate. It carries out the reaction 4-O-beta-D-glucosyl-trans-ferulate + H2O = 4-O-beta-D-glucosyl-vanillin + acetate. It participates in aromatic compound metabolism; phenylpropanoid biosynthesis. Involved in the biosynthesis of vanillin (4-hydroxy-3-methoxy-benzaldehyde) and derivative natural products, key components of vanilla pods flavor. Catalyzes the double carbon bond cleavage of ferulic acid to vanillin and of their respective glucosides via a coupled non-oxidative hydratase/lyase reaction. Inactive toward p-coumaric acid, caffeic acid and their glucosides derivatives. The chain is Vanillin synthase, chloroplastic from Vanilla planifolia (Vanilla).